A 115-amino-acid polypeptide reads, in one-letter code: UPF0738 protein SE_0694 (115 aa).

It belongs to the UPF0738 family.

This is UPF0738 protein SE_0694 from Staphylococcus epidermidis (strain ATCC 12228 / FDA PCI 1200).